A 406-amino-acid chain; its full sequence is Arginine biosynthesis bifunctional protein ArgJ (406 aa).

Substrate is bound by residues Thr152, Lys179, Thr190, Glu277, Asn401, and Ser406. Thr190 serves as the catalytic Nucleophile.

It belongs to the ArgJ family. As to quaternary structure, heterotetramer of two alpha and two beta chains.

The protein localises to the cytoplasm. It catalyses the reaction N(2)-acetyl-L-ornithine + L-glutamate = N-acetyl-L-glutamate + L-ornithine. It carries out the reaction L-glutamate + acetyl-CoA = N-acetyl-L-glutamate + CoA + H(+). It participates in amino-acid biosynthesis; L-arginine biosynthesis; L-ornithine and N-acetyl-L-glutamate from L-glutamate and N(2)-acetyl-L-ornithine (cyclic): step 1/1. It functions in the pathway amino-acid biosynthesis; L-arginine biosynthesis; N(2)-acetyl-L-ornithine from L-glutamate: step 1/4. Catalyzes two activities which are involved in the cyclic version of arginine biosynthesis: the synthesis of N-acetylglutamate from glutamate and acetyl-CoA as the acetyl donor, and of ornithine by transacetylation between N(2)-acetylornithine and glutamate. This chain is Arginine biosynthesis bifunctional protein ArgJ, found in Neisseria gonorrhoeae (strain ATCC 700825 / FA 1090).